We begin with the raw amino-acid sequence, 234 residues long: Viral Fc-gamma receptor-like protein IR11 (234 aa).

A signal peptide spans 1–23; sequence MQTYSTPLTLVIVTSLFLFTTQG. In terms of domain architecture, Ig-like V-type spans 24–122; sequence SSSNAVEPTK…VKDTGVYLLQ (99 aa). Residues 24-182 are Extracellular-facing; sequence SSSNAVEPTK…DLKRQWSGLS (159 aa). N-linked (GlcNAc...) asparagine; by host glycans are attached at residues asparagine 57, asparagine 105, and asparagine 110. Residues 183-203 form a helical membrane-spanning segment; it reads LHCAWVSGMMIFVGALVICFL. The Cytoplasmic segment spans residues 204–234; sequence RSQRIGEQDAEHLRTDLDTEPLLLTVDGDLQ.

Belongs to the RL11 family.

It is found in the membrane. The protein is Viral Fc-gamma receptor-like protein IR11 of Homo sapiens (Human).